A 111-amino-acid chain; its full sequence is Large ribosomal subunit protein uL24 (111 aa).

The protein belongs to the universal ribosomal protein uL24 family. As to quaternary structure, part of the 50S ribosomal subunit.

Its function is as follows. One of two assembly initiator proteins, it binds directly to the 5'-end of the 23S rRNA, where it nucleates assembly of the 50S subunit. In terms of biological role, one of the proteins that surrounds the polypeptide exit tunnel on the outside of the subunit. The protein is Large ribosomal subunit protein uL24 of Bifidobacterium longum (strain DJO10A).